A 259-amino-acid polypeptide reads, in one-letter code: Early E4 30 kDa protein (259 aa).

Belongs to the adenoviridae E4 30 to 34 kDa protein family. Interacts with E1B-55k.

It localises to the host nucleus. Its subcellular location is the host cytoplasm. Functionally, plays a major role to prevent cellular inhibition of viral genome replication by nuclear bodies. Assembles an SCF-like E3 ubiquitin ligase complex based on the cellular proteins ELOB, ELOC, CUL5 and RBX1, in cooperation with viral E1B-55K. This viral RING-type ligase ubiquitinates cellular substrates prior to proteasomal degradation: p53/TP53, LIG4, MRE11-RAD50-NBS1 (MRN) complex, ITGA3, DAXX and BLM. In Canine adenovirus serotype 2 (strain Toronto A 26-61) (CAdV-2), this protein is Early E4 30 kDa protein.